The chain runs to 223 residues: Global nitrogen regulator (223 aa).

The 74-residue stretch at 143 to 216 (RDMGSRLVSF…KKKITVHKPV (74 aa)) folds into the HTH crp-type domain. Positions 176-195 (HQAIAEAIGSTRVTVTRLLG) form a DNA-binding region, H-T-H motif.

Its function is as follows. Required for full expression of proteins subject to ammonium repression. Transcriptional activator of genes subject to nitrogen control. Functionally, has affinity for the xisA upstream region. Binds to a 66 bp region containing three repeats of the consensus recognition sequence 5'-ACATT-3'. This is Global nitrogen regulator (ntcA) from Nostoc sp. (strain PCC 7120 / SAG 25.82 / UTEX 2576).